The primary structure comprises 425 residues: Enolase (425 aa).

A (2R)-2-phosphoglycerate-binding site is contributed by Gln-164. Catalysis depends on Glu-208, which acts as the Proton donor. 3 residues coordinate Mg(2+): Asp-243, Glu-286, and Asp-312. Positions 337, 366, 367, and 388 each coordinate (2R)-2-phosphoglycerate. Residue Lys-337 is the Proton acceptor of the active site.

Belongs to the enolase family. Requires Mg(2+) as cofactor.

Its subcellular location is the cytoplasm. It localises to the secreted. The protein localises to the cell surface. The catalysed reaction is (2R)-2-phosphoglycerate = phosphoenolpyruvate + H2O. It functions in the pathway carbohydrate degradation; glycolysis; pyruvate from D-glyceraldehyde 3-phosphate: step 4/5. Catalyzes the reversible conversion of 2-phosphoglycerate (2-PG) into phosphoenolpyruvate (PEP). It is essential for the degradation of carbohydrates via glycolysis. This is Enolase from Methanococcus aeolicus (strain ATCC BAA-1280 / DSM 17508 / OCM 812 / Nankai-3).